Here is a 543-residue protein sequence, read N- to C-terminus: Membrane protein insertase YidC (543 aa).

The helical transmembrane segment at 7 to 27 threads the bilayer; sequence FLLIGLAMVSFLLWQQWQVDY. Residues 30–61 form a disordered region; the sequence is QPAQPVESQQTTGSDAPNSNGDVPIATPTNKS. Polar residues predominate over residues 35 to 61; that stretch reads VESQQTTGSDAPNSNGDVPIATPTNKS. A run of 4 helical transmembrane segments spans residues 341-361, 421-441, 451-471, and 499-519; these read FAFL…IILI, GGCF…WVLL, FIFW…PILT, and PVAM…YWLI.

It belongs to the OXA1/ALB3/YidC family. Type 1 subfamily. As to quaternary structure, interacts with the Sec translocase complex via SecD. Specifically interacts with transmembrane segments of nascent integral membrane proteins during membrane integration.

The protein localises to the cell inner membrane. Its function is as follows. Required for the insertion and/or proper folding and/or complex formation of integral membrane proteins into the membrane. Involved in integration of membrane proteins that insert both dependently and independently of the Sec translocase complex, as well as at least some lipoproteins. Aids folding of multispanning membrane proteins. The sequence is that of Membrane protein insertase YidC from Pseudoalteromonas atlantica (strain T6c / ATCC BAA-1087).